Here is a 254-residue protein sequence, read N- to C-terminus: MTLNEVTISRAILEEQHRALIDHLEMDAAVIGGGPSGLACAALLGEKGVKCALIEKKLSIGGGMWGGGMMFPRIVVQEDARRLLDRFGIAYKAFEEGYYVAKSVEAVAKLTAAACDAGVEFFNLTTVEDVMIRGDGRIGGLVVNWTPVDMAGLHVDPLTMACTCTVDATGHDAMIARMVEKKGGALTVKGESFMWAERAESQILAHTKEVFPGLFVTGMAANAVAGECRMGPIFGGMLLSGERAAELVAERLGR.

Residues S36, 55–56 (EK), G63, V127, and 154–156 (HVD) contribute to the NAD(+) site. Fe cation contacts are provided by D156 and H171. M219 contributes to the NAD(+) binding site. R229 lines the glycine pocket.

The protein belongs to the THI4 family. As to quaternary structure, homooctamer; tetramer of dimers. Fe(2+) is required as a cofactor.

It catalyses the reaction hydrogen sulfide + glycine + NAD(+) = ADP-5-ethyl-4-methylthiazole-2-carboxylate + nicotinamide + 3 H2O + H(+). It functions in the pathway cofactor biosynthesis; thiamine diphosphate biosynthesis. In terms of biological role, involved in the biosynthesis of the thiazole moiety of thiamine. Catalyzes the conversion of NAD and glycine to adenosine diphosphate 5-(2-hydroxyethyl)-4-methylthiazole-2-carboxylate (ADT), an adenylated thiazole intermediate, using free sulfide as a source of sulfur. This is Thiamine thiazole synthase from Methanoculleus marisnigri (strain ATCC 35101 / DSM 1498 / JR1).